We begin with the raw amino-acid sequence, 115 residues long: Protein E6A (115 aa).

Residues 1-25 (MTDKFYFYGLFWGILLFVFLQHMQG) form the signal peptide.

The sequence is that of Protein E6A (12) from Equine herpesvirus 2 (strain 86/87) (EHV-2).